The chain runs to 188 residues: Auxin-induced protein 22C (188 aa).

The EAR-like (transcriptional repression) motif lies at 13–17 (LRLGL). The interval 16-57 (GLPGAGGENNTDKDKNKNKKRVFSDIEGENSSSEEDGKKETK) is disordered. Residues 79–167 (KLYVKVSMDG…KRLRIMKRSD (89 aa)) enclose the PB1 domain.

The protein belongs to the Aux/IAA family. In terms of assembly, homodimers and heterodimers.

The protein localises to the nucleus. In terms of biological role, aux/IAA proteins are short-lived transcriptional factors that function as repressors of early auxin response genes at low auxin concentrations. Repression is thought to result from the interaction with auxin response factors (ARFs), proteins that bind to the auxin-responsive promoter element (AuxRE). Formation of heterodimers with ARF proteins may alter their ability to modulate early auxin response genes expression. The sequence is that of Auxin-induced protein 22C (AUX22C) from Vigna radiata var. radiata (Mung bean).